A 780-amino-acid polypeptide reads, in one-letter code: Myosin heavy chain kinase C (780 aa).

In terms of domain architecture, Alpha-type protein kinase spans isoleucine 40–isoleucine 243. Residues arginine 310–phenylalanine 495 are disordered. The segment covering glutamine 337–glutamine 350 has biased composition (low complexity). The segment covering lysine 353–lysine 376 has biased composition (polar residues). Residues aspartate 380–serine 436 show a composition bias toward low complexity. Polar residues predominate over residues threonine 437–asparagine 450. The segment covering isoleucine 458–glutamine 488 has biased composition (low complexity). 6 WD repeats span residues aspartate 507–asparagine 546, alanine 549–glutamate 589, lysine 591–threonine 628, glycine 631–asparagine 668, glycine 671–threonine 708, and asparagine 748–methionine 780.

The protein belongs to the protein kinase superfamily. Alpha-type protein kinase family. ALPK subfamily. In terms of assembly, interacts with myosin II heavy chain (mhcA). In terms of processing, autophosphorylated in vitro.

The protein resides in the cytoplasm. The protein localises to the cell cortex. It is found in the membrane. It localises to the cleavage furrow. It carries out the reaction L-threonyl-[myosin heavy-chain] + ATP = O-phospho-L-threonyl-[myosin heavy-chain] + ADP + H(+). Functionally, phosphorylates threonine at 'Thr-1823', 'Thr-1833' and 'Thr-2029' in the C-terminal tail region of myosin II heavy chain (mhcA). This phosphorylation is critical in actin-activated ATPase activity of the myosin and regulating the assembly and disassembly of myosin II filament. In vitro, catalytic domain phosphorylates mhcA, myelin basic protein, myosin regulatory light chain, casein and caldesmon. Drives the disassembly of myosin II filaments for efficient cytokinesis and recycling of myosin II that occurs during late cytokinesis. Can be activated in vitro by autophosphorylation. The protein is Myosin heavy chain kinase C (mhkC) of Dictyostelium discoideum (Social amoeba).